Here is a 185-residue protein sequence, read N- to C-terminus: Large ribosomal subunit protein uL5 (185 aa).

Belongs to the universal ribosomal protein uL5 family. In terms of assembly, part of the 50S ribosomal subunit; part of the 5S rRNA/L5/L18/L25 subcomplex. Contacts the 5S rRNA and the P site tRNA. Forms a bridge to the 30S subunit in the 70S ribosome.

Functionally, this is one of the proteins that bind and probably mediate the attachment of the 5S RNA into the large ribosomal subunit, where it forms part of the central protuberance. In the 70S ribosome it contacts protein S13 of the 30S subunit (bridge B1b), connecting the 2 subunits; this bridge is implicated in subunit movement. Contacts the P site tRNA; the 5S rRNA and some of its associated proteins might help stabilize positioning of ribosome-bound tRNAs. In Protochlamydia amoebophila (strain UWE25), this protein is Large ribosomal subunit protein uL5.